A 187-amino-acid polypeptide reads, in one-letter code: Peptide deformylase (187 aa).

Residues C107 and H149 each coordinate Fe cation. Residue E150 is part of the active site. A Fe cation-binding site is contributed by H153.

The protein belongs to the polypeptide deformylase family. Requires Fe(2+) as cofactor.

The enzyme catalyses N-terminal N-formyl-L-methionyl-[peptide] + H2O = N-terminal L-methionyl-[peptide] + formate. Removes the formyl group from the N-terminal Met of newly synthesized proteins. Requires at least a dipeptide for an efficient rate of reaction. N-terminal L-methionine is a prerequisite for activity but the enzyme has broad specificity at other positions. This Synechocystis sp. (strain ATCC 27184 / PCC 6803 / Kazusa) protein is Peptide deformylase.